The following is a 404-amino-acid chain: Phospho-N-acetylmuramoyl-pentapeptide-transferase (404 aa).

10 helical membrane passes run 30–50 (SAAI…IIFF), 73–93 (IPTM…LLFA), 100–120 (IMLL…DDYI), 132–152 (GKFK…TLIF), 209–229 (YMWI…SNGA), 242–262 (TSAI…NVIF), 274–294 (LAEL…FLWY), 301–321 (IFMG…LAIV), 326–346 (LMIP…IIQV), and 381–401 (KIVT…LVTL).

This sequence belongs to the glycosyltransferase 4 family. MraY subfamily. It depends on Mg(2+) as a cofactor.

It is found in the cell inner membrane. The catalysed reaction is UDP-N-acetyl-alpha-D-muramoyl-L-alanyl-gamma-D-glutamyl-meso-2,6-diaminopimeloyl-D-alanyl-D-alanine + di-trans,octa-cis-undecaprenyl phosphate = di-trans,octa-cis-undecaprenyl diphospho-N-acetyl-alpha-D-muramoyl-L-alanyl-D-glutamyl-meso-2,6-diaminopimeloyl-D-alanyl-D-alanine + UMP. Its pathway is cell wall biogenesis; peptidoglycan biosynthesis. Its function is as follows. Catalyzes the initial step of the lipid cycle reactions in the biosynthesis of the cell wall peptidoglycan: transfers peptidoglycan precursor phospho-MurNAc-pentapeptide from UDP-MurNAc-pentapeptide onto the lipid carrier undecaprenyl phosphate, yielding undecaprenyl-pyrophosphoryl-MurNAc-pentapeptide, known as lipid I. This Amoebophilus asiaticus (strain 5a2) protein is Phospho-N-acetylmuramoyl-pentapeptide-transferase.